Here is a 180-residue protein sequence, read N- to C-terminus: MTARLQEFYKEQVVPALMKQFGYKSVMEVPRFTKITLNMGLGEAINDKKVIELAVGDLTKIAGQKPVVTKAKKAIAGFKIRQGYPIGAMVTLRGERMFEFLDRFVTVALPRVRDFRGVSGKSFDGRGNYNIGVKEQIIFPEIEYDKIDALRGLNISITTTAKNDEEAKALLNAFKFPFRN.

It belongs to the universal ribosomal protein uL5 family. Part of the 50S ribosomal subunit; part of the 5S rRNA/L5/L18/L25 subcomplex. Contacts the 5S rRNA and the P site tRNA. Forms a bridge to the 30S subunit in the 70S ribosome.

Functionally, this is one of the proteins that bind and probably mediate the attachment of the 5S RNA into the large ribosomal subunit, where it forms part of the central protuberance. In the 70S ribosome it contacts protein S13 of the 30S subunit (bridge B1b), connecting the 2 subunits; this bridge is implicated in subunit movement. Contacts the P site tRNA; the 5S rRNA and some of its associated proteins might help stabilize positioning of ribosome-bound tRNAs. This is Large ribosomal subunit protein uL5 from Cupriavidus metallidurans (strain ATCC 43123 / DSM 2839 / NBRC 102507 / CH34) (Ralstonia metallidurans).